Consider the following 130-residue polypeptide: Phosphoribosyl-AMP cyclohydrolase (130 aa).

Position 80 (aspartate 80) interacts with Mg(2+). Position 81 (cysteine 81) interacts with Zn(2+). Mg(2+) contacts are provided by aspartate 82 and aspartate 84. 2 residues coordinate Zn(2+): cysteine 98 and cysteine 105.

The protein belongs to the PRA-CH family. In terms of assembly, homodimer. The cofactor is Mg(2+). Requires Zn(2+) as cofactor.

It localises to the cytoplasm. The catalysed reaction is 1-(5-phospho-beta-D-ribosyl)-5'-AMP + H2O = 1-(5-phospho-beta-D-ribosyl)-5-[(5-phospho-beta-D-ribosylamino)methylideneamino]imidazole-4-carboxamide. It functions in the pathway amino-acid biosynthesis; L-histidine biosynthesis; L-histidine from 5-phospho-alpha-D-ribose 1-diphosphate: step 3/9. Its function is as follows. Catalyzes the hydrolysis of the adenine ring of phosphoribosyl-AMP. This Oleidesulfovibrio alaskensis (strain ATCC BAA-1058 / DSM 17464 / G20) (Desulfovibrio alaskensis) protein is Phosphoribosyl-AMP cyclohydrolase.